The primary structure comprises 298 residues: MENFQKVEKIGEGTYGVVYKAKNKLTGEVVALKKIRLDTETEGVPSTAIREISLLKELNHPNIVKLLDVIHTENKLYLVFELLHQDLKKFMDASAVTGIPLPLIKSYLFQLLQGLAFCHSHRVLHRDLKPQNLLINAEGSIKLADFGLARAFGVPVRTYTHEVVTLWYRAPEILLGCKYYSTAVDIWSLGCIFAEMVTRRALFPGDSEIDQLFRIFRTLGTPDEVVWPGVTSMPDYKPSFPKWARQDFSKVVPPLDEDGRSLLSQMLHYDPNKRISAKAALAHPFFQDVTKPVPHLRL.

The residue at position 1 (methionine 1) is an N-acetylmethionine. Residues 4–286 enclose the Protein kinase domain; sequence FQKVEKIGEG…AKAALAHPFF (283 aa). At lysine 6 the chain carries N6-acetyllysine. Position 10-18 (10-18) interacts with ATP; sequence IGEGTYGVV. Threonine 14 carries the phosphothreonine modification. At tyrosine 15 the chain carries Phosphotyrosine; by WEE1. Tyrosine 19 is modified (phosphotyrosine). ATP-binding positions include lysine 33, 81–83, and aspartate 86; that span reads ELL. The active-site Proton acceptor is aspartate 127. Residues 129 to 132 and aspartate 145 each bind ATP; that span reads KPQN. Mg(2+) contacts are provided by asparagine 132 and aspartate 145. Phosphothreonine; by CAK and CCRK is present on threonine 160.

This sequence belongs to the protein kinase superfamily. CMGC Ser/Thr protein kinase family. CDC2/CDKX subfamily. As to quaternary structure, found in a complex with CABLES1, CCNA1 and CCNE1. Interacts with CABLES1. Interacts with UHRF2. Part of a complex consisting of UHRF2, CDK2 and CCNE1. Interacts with the Speedy/Ringo proteins SPDYA and SPDYC. Interaction with SPDYA promotes kinase activation via a conformation change that alleviates obstruction of the substrate-binding cleft by the T-loop. Found in a complex with both SPDYA and CDKN1B/KIP1. Binds to RB1 and CDK7. Binding to CDKN1A (p21) leads to CDK2/cyclin E inactivation at the G1-S phase DNA damage checkpoint, thereby arresting cells at the G1-S transition during DNA repair. Associated with PTPN6 and beta-catenin/CTNNB1. Interacts with CACUL1. May interact with CEP63. Interacts with ANKRD17. Interacts with CEBPA (when phosphorylated). Forms a ternary complex with CCNA2 and CDKN1B; CDKN1B inhibits the kinase activity of CDK2 through conformational rearrangements. Interacts with cyclins A, B1, B3, D, or E. Interacts with CDK2AP2. Mg(2+) serves as cofactor. In terms of processing, phosphorylated at Thr-160 by CDK7 in a CAK complex. Phosphorylation at Thr-160 promotes kinase activity, whereas phosphorylation at Tyr-15 by WEE1 reduces slightly kinase activity. Phosphorylated on Thr-14 and Tyr-15 during S and G2 phases before being dephosphorylated by CDC25A. Nitrosylated after treatment with nitric oxide (DETA-NO).

Its subcellular location is the cytoplasm. The protein resides in the cytoskeleton. It localises to the microtubule organizing center. The protein localises to the centrosome. It is found in the nucleus. Its subcellular location is the cajal body. The protein resides in the endosome. It catalyses the reaction L-seryl-[protein] + ATP = O-phospho-L-seryl-[protein] + ADP + H(+). The enzyme catalyses L-threonyl-[protein] + ATP = O-phospho-L-threonyl-[protein] + ADP + H(+). Phosphorylation at Thr-14 or Tyr-15 inactivates the enzyme, while phosphorylation at Thr-160 activates it. Stimulated by MYC. Inactivated by CDKN1A (p21). Serine/threonine-protein kinase involved in the control of the cell cycle; essential for meiosis, but dispensable for mitosis. Phosphorylates CABLES1, CTNNB1, CDK2AP2, ERCC6, NBN, USP37, p53/TP53, NPM1, CDK7, RB1, BRCA2, MYC, NPAT, EZH2. Triggers duplication of centrosomes and DNA. Acts at the G1-S transition to promote the E2F transcriptional program and the initiation of DNA synthesis, and modulates G2 progression; controls the timing of entry into mitosis/meiosis by controlling the subsequent activation of cyclin B/CDK1 by phosphorylation, and coordinates the activation of cyclin B/CDK1 at the centrosome and in the nucleus. Crucial role in orchestrating a fine balance between cellular proliferation, cell death, and DNA repair in embryonic stem cells (ESCs). Activity of CDK2 is maximal during S phase and G2; activated by interaction with cyclin E during the early stages of DNA synthesis to permit G1-S transition, and subsequently activated by cyclin A2 (cyclin A1 in germ cells) during the late stages of DNA replication to drive the transition from S phase to mitosis, the G2 phase. EZH2 phosphorylation promotes H3K27me3 maintenance and epigenetic gene silencing. Cyclin E/CDK2 prevents oxidative stress-mediated Ras-induced senescence by phosphorylating MYC. Involved in G1-S phase DNA damage checkpoint that prevents cells with damaged DNA from initiating mitosis; regulates homologous recombination-dependent repair by phosphorylating BRCA2, this phosphorylation is low in S phase when recombination is active, but increases as cells progress towards mitosis. In response to DNA damage, double-strand break repair by homologous recombination a reduction of CDK2-mediated BRCA2 phosphorylation. Involved in regulation of telomere repair by mediating phosphorylation of NBN. Phosphorylation of RB1 disturbs its interaction with E2F1. NPM1 phosphorylation by cyclin E/CDK2 promotes its dissociation from unduplicated centrosomes, thus initiating centrosome duplication. Cyclin E/CDK2-mediated phosphorylation of NPAT at G1-S transition and until prophase stimulates the NPAT-mediated activation of histone gene transcription during S phase. Required for vitamin D-mediated growth inhibition by being itself inactivated. Involved in the nitric oxide- (NO) mediated signaling in a nitrosylation/activation-dependent manner. USP37 is activated by phosphorylation and thus triggers G1-S transition. CTNNB1 phosphorylation regulates insulin internalization. Phosphorylates FOXP3 and negatively regulates its transcriptional activity and protein stability. Phosphorylates ERCC6 which is essential for its chromatin remodeling activity at DNA double-strand breaks. Acts as a regulator of the phosphatidylinositol 3-kinase/protein kinase B signal transduction by mediating phosphorylation of the C-terminus of protein kinase B (PKB/AKT1 and PKB/AKT2), promoting its activation. The sequence is that of Cyclin-dependent kinase 2 (CDK2) from Mesocricetus auratus (Golden hamster).